Consider the following 297-residue polypeptide: Ribosomal RNA small subunit methyltransferase A (297 aa).

S-adenosyl-L-methionine is bound by residues N31, L33, G58, E79, D104, and N129.

The protein belongs to the class I-like SAM-binding methyltransferase superfamily. rRNA adenine N(6)-methyltransferase family. RsmA subfamily.

It localises to the cytoplasm. It carries out the reaction adenosine(1518)/adenosine(1519) in 16S rRNA + 4 S-adenosyl-L-methionine = N(6)-dimethyladenosine(1518)/N(6)-dimethyladenosine(1519) in 16S rRNA + 4 S-adenosyl-L-homocysteine + 4 H(+). Its function is as follows. Specifically dimethylates two adjacent adenosines (A1518 and A1519) in the loop of a conserved hairpin near the 3'-end of 16S rRNA in the 30S particle. May play a critical role in biogenesis of 30S subunits. This chain is Ribosomal RNA small subunit methyltransferase A, found in Pediococcus pentosaceus (strain ATCC 25745 / CCUG 21536 / LMG 10740 / 183-1w).